The sequence spans 2554 residues: Highly reducing polyketide synthase PKS6 (2554 aa).

Residues M1–G48 are disordered. Residues P8–G48 show a composition bias toward polar residues. In terms of domain architecture, Ketosynthase family 3 (KS3) spans L56 to A481. Catalysis depends on for beta-ketoacyl synthase activity residues C230, H367, and H407. The segment at V595–E913 is malonyl-CoA:ACP transacylase (MAT) domain. The interval H981–E1119 is N-terminal hotdog fold. The tract at residues H981–L1281 is dehydratase (DH) domain. Residues H981–G1287 form the PKS/mFAS DH domain. The active-site Proton acceptor; for dehydratase activity is the H1013. A C-terminal hotdog fold region spans residues A1137–G1287. D1200 functions as the Proton donor; for dehydratase activity in the catalytic mechanism. The tract at residues V1451–L1556 is methyltransferase (CMet) domain. The segment at G1840–L2153 is enoyl reductase (ER) domain. The ketoreductase (KR) domain stretch occupies residues A2177 to I2353. The 78-residue stretch at E2457 to S2534 folds into the Carrier domain. O-(pantetheine 4'-phosphoryl)serine is present on S2494.

The protein operates within secondary metabolite biosynthesis. In terms of biological role, highly reducing polyketide synthase; part of the gene cluster that mediates the biosynthesis of the lipopeptide fusaristatin A. Fusaristatin A consists of a polyketide chain linked to three amino acid residues glutamine (Gln), dehydroalanine (dehydro-Ala), and beta-aminoisobutyric acid. The biosynthesis starts with formation of a linear polyketide chain by the highly reducing polyketide synthase PKS6. The gene cluster does not contain an acyl-CoA ligase or an acyl-transferase, and it is therefore predicted that the polyketide is transferred directly to the nonribosomal peptide synthetase NRPS7. Modules 1-3 from NRPS7 incorporate dehydro-Ala, Gln, and beta-aminoisobutyric acid in the compound, which is released by cyclization. The beta-aminoisobutyric acid units are most likely not freely available to the NRPS, but can be synthesized from thymine, which requires a dehydrogenase, a monooxygenase, and an aminotransferase. The fusaristatin A cluster contains a cytochrome P450 monooxygenase (FGSG_08207) and an aminotransferase (FGSG_17085), which theoretically can perform two of the enzymatic steps. The enzymes may however also be involved in biosynthesis of dehydroalanine or modification of the polyketide. The dehydro-Ala residue can be a result of cyclization, where serine is dehydrated. The last gene of the cluster encodes a protein with an A/B barrel domain found in variable enzymes, which hampers functional prediction. This Gibberella zeae (strain ATCC MYA-4620 / CBS 123657 / FGSC 9075 / NRRL 31084 / PH-1) (Wheat head blight fungus) protein is Highly reducing polyketide synthase PKS6.